A 608-amino-acid chain; its full sequence is Microtubule-associated protein VP7 (608 aa).

It is found in the virion. The protein localises to the host cytoplasm. Its subcellular location is the host cytoskeleton. Functionally, minor inner capsid component. Displays NTPase and RNA 5'-triphosphatase (RTPase) activities. May function as a cofactor of polymerase. Associates with microtubules and plays a role in the formation, structural organization and morphology of viral inclusions, where the assembly of cores and the replication of viral RNA occur. This Oryza latifolia (Indian wild rice) protein is Microtubule-associated protein VP7.